The following is a 320-amino-acid chain: Olfactory receptor 51E2 (320 aa).

At 1–24 (MSSCNFTHATFMLIGIPGLEEAHF) the chain is on the extracellular side. Asparagine 5 is a glycosylation site (N-linked (GlcNAc...) asparagine). The helical transmembrane segment at 25 to 45 (WFGFPLLSMYAVALFGNCIVV) threads the bilayer. Topologically, residues 46–53 (FIVRTERS) are cytoplasmic. A helical membrane pass occupies residues 54-74 (LHAPMYLFLCMLAAIDLALST). Over 75 to 98 (STMPKILALFWFDSREITFDACLA) the chain is Extracellular. The cysteines at positions 96 and 178 are disulfide-linked. Residues 99–119 (QMFFIHALSAIESTILLAMAF) form a helical membrane-spanning segment. Residues 120–138 (DRYVAICHPLRHAAVLNNT) are Cytoplasmic-facing. The helical transmembrane segment at 139 to 159 (VTVQIGMVALVRGSLFFFPLP) threads the bilayer. Residues 160-195 (LLIKRLAFCHSNVLSHSYCVHQDVMKLAYTDTLPNV) lie on the Extracellular side of the membrane. Residues 196-216 (VYGLTAILLVMGVDVMFISLS) form a helical membrane-spanning segment. The Cytoplasmic segment spans residues 217-236 (YFLIIRAVLQLPSKSERAKA). A helical transmembrane segment spans residues 237–257 (FGTCVSHIGVVLAFYVPLIGL). At 258 to 272 (SVVHRFGNSLDPIVH) the chain is on the extracellular side. Residues 273–293 (VLMGDVYLLLPPVINPIIYGA) traverse the membrane as a helical segment. At 294–320 (KTKQIRTRVLAMFKISCDKDIEAGGNT) the chain is on the cytoplasmic side.

The protein belongs to the G-protein coupled receptor 1 family. In terms of tissue distribution, expressed in brain and liver. Expressed only in some areas of the brain and in the olfactory epithelium.

It localises to the cell membrane. It is found in the early endosome membrane. Its function is as follows. Olfactory receptor. The activity of this receptor is probably mediated by G-proteins which induce elevation of intracellular Ca(2+), cAMP and activation of phosphorylation of the protein kinases PKA and MAPK3/MAPK1. Activation of OR51E2 may affect melanocyte proliferation, differentiation, and melanogenesis and may increase proliferation and migration of primary retinal pigment epithelial (RPE) cells. Activated by the short chain fatty acids (SCFA), acetate and propionate. In response to SCFA, may positively regulate renin secretion and increase blood pressure. May also be activated by steroid hormones and regulate cell proliferation. Activated by L-lactate in glomus cells. This chain is Olfactory receptor 51E2 (Or51e2), found in Rattus norvegicus (Rat).